The sequence spans 147 residues: Small ribosomal subunit protein bS18 (147 aa).

This sequence belongs to the bacterial ribosomal protein bS18 family. As to quaternary structure, part of the 30S ribosomal subunit. Forms a tight heterodimer with protein bS6.

Functionally, binds as a heterodimer with protein bS6 to the central domain of the 16S rRNA, where it helps stabilize the platform of the 30S subunit. The protein is Small ribosomal subunit protein bS18 of Dehalococcoides mccartyi (strain ATCC BAA-2100 / JCM 16839 / KCTC 5957 / BAV1).